The primary structure comprises 66 residues: Large ribosomal subunit protein bL33c (66 aa).

This sequence belongs to the bacterial ribosomal protein bL33 family.

It localises to the plastid. Its subcellular location is the chloroplast. This chain is Large ribosomal subunit protein bL33c, found in Saccharum officinarum (Sugarcane).